The primary structure comprises 348 residues: Nicotinate-nucleotide--dimethylbenzimidazole phosphoribosyltransferase (348 aa).

E316 serves as the catalytic Proton acceptor.

The protein belongs to the CobT family.

The catalysed reaction is 5,6-dimethylbenzimidazole + nicotinate beta-D-ribonucleotide = alpha-ribazole 5'-phosphate + nicotinate + H(+). It participates in nucleoside biosynthesis; alpha-ribazole biosynthesis; alpha-ribazole from 5,6-dimethylbenzimidazole: step 1/2. Functionally, catalyzes the synthesis of alpha-ribazole-5'-phosphate from nicotinate mononucleotide (NAMN) and 5,6-dimethylbenzimidazole (DMB). The protein is Nicotinate-nucleotide--dimethylbenzimidazole phosphoribosyltransferase of Xanthomonas axonopodis pv. citri (strain 306).